A 226-amino-acid chain; its full sequence is Small ribosomal subunit protein uS5 (226 aa).

Positions 1 to 18 are enriched in polar residues; sequence MAAPQRSRTTGAPSSGGP. The tract at residues 1-45 is disordered; sequence MAAPQRSRTTGAPSSGGPSENERGRGGDRRGGDRRGGDRRGGDDR. Residues 20 to 45 show a composition bias toward basic and acidic residues; sequence ENERGRGGDRRGGDRRGGDRRGGDDR. Positions 48–111 constitute an S5 DRBM domain; sequence FVERVVTINR…EEAKKNFFRV (64 aa).

Belongs to the universal ribosomal protein uS5 family. Part of the 30S ribosomal subunit. Contacts proteins S4 and S8.

Functionally, with S4 and S12 plays an important role in translational accuracy. Its function is as follows. Located at the back of the 30S subunit body where it stabilizes the conformation of the head with respect to the body. This is Small ribosomal subunit protein uS5 from Beutenbergia cavernae (strain ATCC BAA-8 / DSM 12333 / CCUG 43141 / JCM 11478 / NBRC 16432 / NCIMB 13614 / HKI 0122).